The sequence spans 85 residues: MFQKEIKINALHGLHTRPAAEFVKEAKNFISDIHIIYHGKSVNAKSLFKIQTLGLVKDSVIILSAEGEDEKKAVEHLSKIMTELE.

Residues 1 to 85 (MFQKEIKINA…HLSKIMTELE (85 aa)) form the HPr domain. Catalysis depends on H15, which acts as the Pros-phosphohistidine intermediate.

This sequence belongs to the HPr family.

Its subcellular location is the cytoplasm. In terms of biological role, general (non sugar-specific) component of the phosphoenolpyruvate-dependent sugar phosphotransferase system (sugar PTS). This major carbohydrate active-transport system catalyzes the phosphorylation of incoming sugar substrates concomitantly with their translocation across the cell membrane. The phosphoryl group from phosphoenolpyruvate (PEP) is transferred to the phosphoryl carrier protein HPr by enzyme I. Phospho-HPr then transfers it to the PTS EIIA domain. The protein is Phosphocarrier protein HPr (ptsH) of Buchnera aphidicola subsp. Schizaphis graminum (strain Sg).